The primary structure comprises 217 residues: Uracil-DNA glycosylase (217 aa).

Asp-62 (proton acceptor) is an active-site residue.

Belongs to the uracil-DNA glycosylase (UDG) superfamily. UNG family.

The protein resides in the cytoplasm. The catalysed reaction is Hydrolyzes single-stranded DNA or mismatched double-stranded DNA and polynucleotides, releasing free uracil.. Excises uracil residues from the DNA which can arise as a result of misincorporation of dUMP residues by DNA polymerase or due to deamination of cytosine. This is Uracil-DNA glycosylase from Streptococcus pneumoniae serotype 19F (strain G54).